A 194-amino-acid polypeptide reads, in one-letter code: RNA polymerase II subunit A C-terminal domain phosphatase SSU72 like protein 1 (194 aa).

Belongs to the SSU72 phosphatase family.

The protein resides in the nucleus. The catalysed reaction is O-phospho-L-seryl-[protein] + H2O = L-seryl-[protein] + phosphate. It catalyses the reaction O-phospho-L-threonyl-[protein] + H2O = L-threonyl-[protein] + phosphate. In terms of biological role, protein phosphatase that catalyzes the dephosphorylation of the C-terminal domain of RNA polymerase II. Plays a role in RNA processing and termination. The protein is RNA polymerase II subunit A C-terminal domain phosphatase SSU72 like protein 1 of Homo sapiens (Human).